The following is a 431-amino-acid chain: Divergent protein kinase domain 1B (431 aa).

Topologically, residues Met-1–Lys-30 are cytoplasmic. The May mediate ER retention motif lies at Arg-5–Arg-6. The helical transmembrane segment at Tyr-31 to Ser-51 threads the bilayer. The Lumenal segment spans residues Ser-52–Ser-431. 2 disulfide bridges follow: Cys-57-Cys-94 and Cys-62-Cys-117.

Belongs to the DIPK family. Post-translationally, among the many cysteines in the lumenal domain, most are probably involved in disulfide bonds.

It localises to the endoplasmic reticulum membrane. The polypeptide is Divergent protein kinase domain 1B (Rattus norvegicus (Rat)).